Reading from the N-terminus, the 130-residue chain is Small ribosomal subunit protein uS8 (130 aa).

This sequence belongs to the universal ribosomal protein uS8 family. As to quaternary structure, part of the 30S ribosomal subunit. Contacts proteins S5 and S12.

Its function is as follows. One of the primary rRNA binding proteins, it binds directly to 16S rRNA central domain where it helps coordinate assembly of the platform of the 30S subunit. This is Small ribosomal subunit protein uS8 from Vibrio vulnificus (strain CMCP6).